Here is a 736-residue protein sequence, read N- to C-terminus: Myotubularin-related protein 12 (736 aa).

The region spanning 182–558 is the Myotubularin phosphatase domain; the sequence is YLRSTNPEML…RQLSLPSSAF (377 aa). The disordered stretch occupies residues 672–691; the sequence is SLATQPDHPPPLHHRLPSFG.

It belongs to the protein-tyrosine phosphatase family. Non-receptor class myotubularin subfamily. As to quaternary structure, heterodimer with lipid phosphatase mtm1. In skeletal muscles, the interaction stabilizes both mtmr12 and mtm1 protein levels.

It is found in the cytoplasm. Its subcellular location is the sarcoplasmic reticulum. The protein resides in the myofibril. It localises to the sarcomere. Acts as an adapter for the myotubularin phosphatase mtm1 to regulate mtm1 protein stability and possibly its intracellular location. By stabilizing mtm1 protein levels, required for skeletal muscle maintenance but not for myogenesis. In skeletal muscle cells, does not regulate mtm1 subcellular localization. The chain is Myotubularin-related protein 12 (mtmr12) from Danio rerio (Zebrafish).